Consider the following 459-residue polypeptide: Paired box protein Pax-8 (459 aa).

The paired DNA-binding region spans 9-135 (GHGGLNQLGG…SSINRIIRTK (127 aa)). The tract at residues 12–68 (GLNQLGGAFVNGRPLPEVVRQRIVDLAHQGVRPCDISRQLRVSHGCVSKILGRYYET) is PAI subdomain. The segment at 87–135 (KVVEKIGDYKRQNPTMFAWEIRDRLLAEGVCDNDTVPSVSSINRIIRTK) is RED subdomain. The segment covering 159–182 (LIPSSAVTPPESPQSDSLGSTYSI) has biased composition (polar residues). The interval 159 to 223 (LIPSSAVTPP…QSSSSGPRKH (65 aa)) is disordered. Residue Ser305 is modified to Phosphoserine.

In terms of assembly, interacts with WWTR1.

The protein localises to the nucleus. In terms of biological role, thought to encode a transcription factor. It may have a role in kidney cell differentiation. May play a regulatory role in mammalian development. The protein is Paired box protein Pax-8 (PAX8) of Canis lupus familiaris (Dog).